The chain runs to 1399 residues: DNA-directed RNA polymerase subunit beta' (1399 aa).

The Zn(2+) site is built by Cys71, Cys73, Cys86, and Cys89. 3 residues coordinate Mg(2+): Asp462, Asp464, and Asp466. Zn(2+) contacts are provided by Cys810, Cys884, Cys891, and Cys894.

The protein belongs to the RNA polymerase beta' chain family. In terms of assembly, the RNAP catalytic core consists of 2 alpha, 1 beta, 1 beta' and 1 omega subunit. When a sigma factor is associated with the core the holoenzyme is formed, which can initiate transcription. Requires Mg(2+) as cofactor. Zn(2+) is required as a cofactor.

The enzyme catalyses RNA(n) + a ribonucleoside 5'-triphosphate = RNA(n+1) + diphosphate. Its function is as follows. DNA-dependent RNA polymerase catalyzes the transcription of DNA into RNA using the four ribonucleoside triphosphates as substrates. The chain is DNA-directed RNA polymerase subunit beta' from Chelativorans sp. (strain BNC1).